The following is a 258-amino-acid chain: UPF0246 protein Sden_2729 (258 aa).

This sequence belongs to the UPF0246 family.

This chain is UPF0246 protein Sden_2729, found in Shewanella denitrificans (strain OS217 / ATCC BAA-1090 / DSM 15013).